A 292-amino-acid polypeptide reads, in one-letter code: NAD(P)H-hydrate epimerase (292 aa).

The transit peptide at 1–52 directs the protein to the mitochondrion; sequence MYGLRTLFSLGLLVGGARLGARVAQVGALGGTCPLGQGLVADGNSQCKQFRT. The region spanning 68-279 is the YjeF N-terminal domain; that stretch reads AQAVDEELFN…ALEKKYSLNL (212 aa). A (6S)-NADPHX-binding site is contributed by 122-126; sequence NNGGD. K(+)-binding residues include N123 and D189. (6S)-NADPHX is bound by residues 193–199 and D222; that span reads GFSFKGA. Residue S225 participates in K(+) binding.

It belongs to the NnrE/AIBP family. K(+) serves as cofactor.

The protein localises to the mitochondrion. The protein resides in the secreted. It catalyses the reaction (6R)-NADHX = (6S)-NADHX. It carries out the reaction (6R)-NADPHX = (6S)-NADPHX. Functionally, catalyzes the epimerization of the S- and R-forms of NAD(P)HX, a damaged form of NAD(P)H that is a result of enzymatic or heat-dependent hydration. This is a prerequisite for the S-specific NAD(P)H-hydrate dehydratase to allow the repair of both epimers of NAD(P)HX. The sequence is that of NAD(P)H-hydrate epimerase from Xenopus tropicalis (Western clawed frog).